The following is an 89-amino-acid chain: Small ribosomal subunit protein uS15 (89 aa).

Belongs to the universal ribosomal protein uS15 family. Part of the 30S ribosomal subunit. Forms a bridge to the 50S subunit in the 70S ribosome, contacting the 23S rRNA.

In terms of biological role, one of the primary rRNA binding proteins, it binds directly to 16S rRNA where it helps nucleate assembly of the platform of the 30S subunit by binding and bridging several RNA helices of the 16S rRNA. Forms an intersubunit bridge (bridge B4) with the 23S rRNA of the 50S subunit in the ribosome. In Streptococcus gordonii (strain Challis / ATCC 35105 / BCRC 15272 / CH1 / DL1 / V288), this protein is Small ribosomal subunit protein uS15.